The following is a 635-amino-acid chain: Threonine--tRNA ligase (635 aa).

The 61-residue stretch at 1–61 (MIAITLPDGS…DRDAELAIVT (61 aa)) folds into the TGS domain. The tract at residues 242 to 533 (DHRKLGKTLD…LLENHAGALP (292 aa)) is catalytic. Positions 333, 384, and 510 each coordinate Zn(2+).

Belongs to the class-II aminoacyl-tRNA synthetase family. Homodimer. It depends on Zn(2+) as a cofactor.

It localises to the cytoplasm. It carries out the reaction tRNA(Thr) + L-threonine + ATP = L-threonyl-tRNA(Thr) + AMP + diphosphate + H(+). Its function is as follows. Catalyzes the attachment of threonine to tRNA(Thr) in a two-step reaction: L-threonine is first activated by ATP to form Thr-AMP and then transferred to the acceptor end of tRNA(Thr). Also edits incorrectly charged L-seryl-tRNA(Thr). The polypeptide is Threonine--tRNA ligase (Cupriavidus necator (strain ATCC 17699 / DSM 428 / KCTC 22496 / NCIMB 10442 / H16 / Stanier 337) (Ralstonia eutropha)).